Here is a 238-residue protein sequence, read N- to C-terminus: UPF0758 protein Ajs_3450 (238 aa).

The MPN domain occupies 116–238 (VFDSPQAVQH…ALSMAEQGLV (123 aa)). 3 residues coordinate Zn(2+): H187, H189, and D200. The JAMM motif signature appears at 187–200 (HNHPSGSVQPSRAD).

Belongs to the UPF0758 family.

The sequence is that of UPF0758 protein Ajs_3450 from Acidovorax sp. (strain JS42).